We begin with the raw amino-acid sequence, 467 residues long: Metal transporter cnnm-4 (467 aa).

At 1 to 110 the chain is on the extracellular side; sequence MELYAAGRYD…EIPEGKDKTR (110 aa). The N-linked (GlcNAc...) asparagine glycan is linked to asparagine 61. The 187-residue stretch at 107–293 folds into the CNNM transmembrane domain; it reads DKTRVYFMMP…LEDEEAADGN (187 aa). The helical transmembrane segment at 111-131 threads the bilayer; sequence VYFMMPLLVLCLGLSATFSGL. Residues 132 to 170 are Cytoplasmic-facing; that stretch reads NLAIMSFSINDLKLIQESDSDKLMKQRAMDVMRLRRNSN. Residues 171-191 form a helical membrane-spanning segment; that stretch reads FVLVTIIFGNCFCNISITLLM. The Extracellular portion of the chain corresponds to 192–196; it reads NYFAE. A helical membrane pass occupies residues 197–217; that stretch reads FYGFGGFIFVELISTALLLIF. The Cytoplasmic portion of the chain corresponds to 218 to 238; it reads TEILPSLIFTKNALAIASRLQ. Residues 239-259 traverse the membrane as a helical segment; sequence YFVIFTMCITSPISYPLAMLL. At 260–467 the chain is on the extracellular side; it reads NIILGKENAD…IFDEKDARQE (208 aa). CBS domains follow at residues 317 to 381 and 394 to 461; these read MTEI…GSDT and KRRK…IFDE. Asparagine 364 carries N-linked (GlcNAc...) asparagine glycosylation.

This sequence belongs to the ACDP family.

Its subcellular location is the cell membrane. Its function is as follows. Probable metal transporter. Probably acts redundantly with the other metal transport proteins cnnm-1, cnnm-2, cnnm-3 and cnnm-5 to regulate Mg(2+) homeostasis. The protein is Metal transporter cnnm-4 of Caenorhabditis elegans.